The sequence spans 1216 residues: DNA-directed RNA polymerase subunit beta' (1216 aa).

Residues Cys60, Cys62, Cys75, and Cys78 each coordinate Zn(2+). Mg(2+) contacts are provided by Asp450, Asp452, and Asp454. The Zn(2+) site is built by Cys819, Cys893, Cys900, and Cys903.

Belongs to the RNA polymerase beta' chain family. In terms of assembly, the RNAP catalytic core consists of 2 alpha, 1 beta, 1 beta' and 1 omega subunit. When a sigma factor is associated with the core the holoenzyme is formed, which can initiate transcription. Mg(2+) is required as a cofactor. It depends on Zn(2+) as a cofactor.

The catalysed reaction is RNA(n) + a ribonucleoside 5'-triphosphate = RNA(n+1) + diphosphate. Functionally, DNA-dependent RNA polymerase catalyzes the transcription of DNA into RNA using the four ribonucleoside triphosphates as substrates. The sequence is that of DNA-directed RNA polymerase subunit beta' from Streptococcus agalactiae serotype Ia (strain ATCC 27591 / A909 / CDC SS700).